The primary structure comprises 376 residues: Protein-tyrosine sulfotransferase 2 (376 aa).

The Cytoplasmic portion of the chain corresponds to 1-8 (MRLSVRKV). The helical; Signal-anchor for type II membrane protein transmembrane segment at 9–25 (LLAVGCALALVLAVQLG) threads the bilayer. The Lumenal portion of the chain corresponds to 26 to 376 (QQVLECRAVL…NSTSPHLGSS (351 aa)). 77–81 (RSGTT) lines the 3'-phosphoadenylyl sulfate pocket. A disulfide bridge links Cys95 with Cys155. Residue Glu98 is the Proton donor/acceptor of the active site. Residues 100 to 104 (RIIPR) form an interaction with peptide substrate region. 3'-phosphoadenylyl sulfate contacts are provided by Arg182, Ser190, and Arg194. Cysteines 224 and 232 form a disulfide. 3'-phosphoadenylyl sulfate-binding positions include Tyr237, 284–293 (STDQVIKPVN), and Lys299. N-linked (GlcNAc...) asparagine glycans are attached at residues Asn342 and Asn367.

Belongs to the protein sulfotransferase family. Homodimer. Can also form heterodimers with TPST1. N-glycosylated.

The protein localises to the golgi apparatus membrane. The enzyme catalyses L-tyrosyl-[protein] + 3'-phosphoadenylyl sulfate = O-sulfo-L-tyrosine-[protein] + adenosine 3',5'-bisphosphate + H(+). Functionally, catalyzes the O-sulfation of tyrosine residues within acidic motifs of polypeptides, using 3'-phosphoadenylyl sulfate (PAPS) as cosubstrate. The polypeptide is Protein-tyrosine sulfotransferase 2 (Tpst2) (Rattus norvegicus (Rat)).